Reading from the N-terminus, the 256-residue chain is Alcohol dehydrogenase (256 aa).

Position 12 to 35 (12 to 35 (FVAGLGGIGLDTSKELVKRDLKNL)) interacts with NAD(+). Position 140 (Ser-140) interacts with substrate. Catalysis depends on Tyr-153, which acts as the Proton acceptor.

Belongs to the short-chain dehydrogenases/reductases (SDR) family. As to quaternary structure, homodimer.

The enzyme catalyses a primary alcohol + NAD(+) = an aldehyde + NADH + H(+). It catalyses the reaction a secondary alcohol + NAD(+) = a ketone + NADH + H(+). The polypeptide is Alcohol dehydrogenase (Adh) (Drosophila teissieri (Fruit fly)).